Reading from the N-terminus, the 488-residue chain is Pre-glycoprotein polyprotein GP complex (488 aa).

Glycine 2 carries the N-myristoyl glycine; by host lipid modification. Residues 2-17 are Extracellular-facing; sequence GQLFSFFEEVPNIIHE. Residues 18 to 32 traverse the membrane as a helical segment; the sequence is AINIALIAVSLIAAL. Position 33 (lysine 33) is a topological domain, cytoplasmic. A helical membrane pass occupies residues 34–53; that stretch reads GMINLWKSGLFQLIFFLTLA. Extracellular segments follow at residues 54–58 and 59–427; these read GRSCS and FRIG…TLVD. Cysteine 57 contributes to the Zn(2+) binding site. Residues asparagine 69, asparagine 88, asparagine 99, asparagine 125, asparagine 171, asparagine 178, and asparagine 222 are each glycosylated (N-linked (GlcNAc...) asparagine; by host). 4 disulfides stabilise this stretch: cysteine 85/cysteine 229, cysteine 274/cysteine 287, cysteine 296/cysteine 305, and cysteine 359/cysteine 380. N-linked (GlcNAc...) asparagine; by host glycosylation is found at asparagine 360, asparagine 368, asparagine 385, and asparagine 390. A helical transmembrane segment spans residues 428-448; it reads ICFWSTLFFTTTLFLHLVGFP. Topologically, residues 449-488 are cytoplasmic; it reads THRHIRGEPCPLPHRLNSRGGCRCGKYPELKKPITWHKNH. Positions 450, 452, 458, 462, 470, 472, and 488 each coordinate Zn(2+).

It belongs to the arenaviridae GPC protein family. Homotetramer; disulfide-linked. As to quaternary structure, homotetramer. GP2 homotetramers bind through ionic interactions with GP1 homotetramers to form the GP complex together with the stable signal peptide. The GP-C polyprotein interacts with the host protease MBTPS1/SKI-1 resulting in the polyprotein processing. In terms of processing, specific enzymatic cleavages in vivo yield mature proteins. GP-C polyprotein is cleaved in the endoplasmic reticulum by the host protease MBTPS1. Only cleaved glycoprotein is incorporated into virions. The SSP remains stably associated with the GP complex following cleavage by signal peptidase and plays crucial roles in the trafficking of GP through the secretory pathway. Post-translationally, myristoylation is necessary for GP2-mediated fusion activity.

It localises to the virion membrane. The protein localises to the host endoplasmic reticulum membrane. Its subcellular location is the host Golgi apparatus membrane. The protein resides in the host cell membrane. Functionally, interacts with the host receptor. Mediates virus attachment to host TFRC. This attachment induces virion internalization predominantly through clathrin-mediated endocytosis. In terms of biological role, class I viral fusion protein that directs fusion of viral and host endosomal membranes, leading to delivery of the nucleocapsid into the cytoplasm. Membrane fusion is mediated by irreversible conformational changes induced upon acidification in the endosome. Its function is as follows. Stable signal peptide (SSP): cleaved and functions as a signal peptide. In addition, it is also retained as the third component of the GP complex. The SSP is required for efficient glycoprotein expression, post-translational maturation cleavage of GP1 and GP2, glycoprotein transport to the cell surface plasma membrane, formation of infectious virus particles, and acid pH-dependent glycoprotein-mediated cell fusion. The sequence is that of Pre-glycoprotein polyprotein GP complex from Homo sapiens (Human).